The primary structure comprises 663 residues: Probable acetolactate synthase 2, chloroplastic (663 aa).

Low complexity predominate over residues 1 to 26 (MAAAAAAASLSVSDAAAKLPKPGGQV). Positions 1-56 (MAAAAAAASLSVSDAAAKLPKPGGQVQRRRDRDRPRVDAAACTRDSRRPTRERCST) are disordered. Residues 1–79 (MAAAAAAASL…TPVRAPVRTR (79 aa)) constitute a chloroplast transit peptide. 2 stretches are compositionally biased toward basic and acidic residues: residues 28–37 (RRRDRDRPRV) and 44–54 (RDSRRPTRERC). Glutamate 132 contributes to the thiamine diphosphate binding site. A disulfide bond links cysteine 152 and cysteine 298. Residues arginine 234, 340–361 (HGTV…LGVR), and 383–402 (DIDP…ICAD) contribute to the FAD site. Positions 478–558 (QHQMWATQHY…VKVMVLNNQH (81 aa)) are thiamine pyrophosphate binding. Residues aspartate 529 and asparagine 556 each contribute to the Mg(2+) site.

The protein belongs to the TPP enzyme family. Mg(2+) serves as cofactor. Thiamine diphosphate is required as a cofactor.

Its subcellular location is the plastid. The protein resides in the chloroplast. It catalyses the reaction 2 pyruvate + H(+) = (2S)-2-acetolactate + CO2. Its pathway is amino-acid biosynthesis; L-isoleucine biosynthesis; L-isoleucine from 2-oxobutanoate: step 1/4. It participates in amino-acid biosynthesis; L-valine biosynthesis; L-valine from pyruvate: step 1/4. In Oryza sativa subsp. japonica (Rice), this protein is Probable acetolactate synthase 2, chloroplastic (ALS2).